We begin with the raw amino-acid sequence, 340 residues long: Aspartate-semialdehyde dehydrogenase (340 aa).

NADP(+)-binding positions include 11–14 (TGEV) and 39–40 (RS). Residue arginine 100 coordinates phosphate. Cysteine 131 serves as the catalytic Acyl-thioester intermediate. A substrate-binding site is contributed by glutamine 158. Residue 161-162 (SG) coordinates NADP(+). Residue lysine 216 coordinates phosphate. Arginine 238 serves as a coordination point for substrate. The active-site Proton acceptor is histidine 245. Residue asparagine 318 participates in NADP(+) binding.

The protein belongs to the aspartate-semialdehyde dehydrogenase family. Homodimer.

It carries out the reaction L-aspartate 4-semialdehyde + phosphate + NADP(+) = 4-phospho-L-aspartate + NADPH + H(+). Its pathway is amino-acid biosynthesis; L-lysine biosynthesis via DAP pathway; (S)-tetrahydrodipicolinate from L-aspartate: step 2/4. It participates in amino-acid biosynthesis; L-methionine biosynthesis via de novo pathway; L-homoserine from L-aspartate: step 2/3. It functions in the pathway amino-acid biosynthesis; L-threonine biosynthesis; L-threonine from L-aspartate: step 2/5. In terms of biological role, catalyzes the NADPH-dependent formation of L-aspartate-semialdehyde (L-ASA) by the reductive dephosphorylation of L-aspartyl-4-phosphate. The protein is Aspartate-semialdehyde dehydrogenase of Aquifex aeolicus (strain VF5).